Here is a 215-residue protein sequence, read N- to C-terminus: Adenylate kinase (215 aa).

An ATP-binding site is contributed by 10 to 15 (GSGKGT). Residues 30–59 (STGDLFRTNIENDTPLGKEIKQIVENGQLV) are NMP. AMP-binding positions include Thr31, Arg36, 57–59 (QLV), 85–88 (GFPR), and Gln92. The tract at residues 121-158 (GRRICQSCCKIFNIYTLPTKEKEICDFCQGILYQRKDD) is LID. An ATP-binding site is contributed by Arg122. Zn(2+)-binding residues include Cys125 and Cys128. 131-132 (IF) serves as a coordination point for ATP. Zn(2+) contacts are provided by Cys145 and Cys148. Residues Arg155 and Arg166 each contribute to the AMP site. Residue Lys194 participates in ATP binding.

Belongs to the adenylate kinase family. Monomer.

Its subcellular location is the cytoplasm. It carries out the reaction AMP + ATP = 2 ADP. The protein operates within purine metabolism; AMP biosynthesis via salvage pathway; AMP from ADP: step 1/1. Functionally, catalyzes the reversible transfer of the terminal phosphate group between ATP and AMP. Plays an important role in cellular energy homeostasis and in adenine nucleotide metabolism. The sequence is that of Adenylate kinase from Borrelia recurrentis (strain A1).